A 628-amino-acid polypeptide reads, in one-letter code: Phomenoic acid biosynthesis cluster MFS-type transporter (628 aa).

14 consecutive transmembrane segments (helical) span residues 102–122, 150–170, 174–194, 204–224, 232–252, 262–282, 302–322, 329–349, 375–395, 407–427, 435–455, 488–508, 524–544, and 595–615; these read IHGFPWFLLVISVLSSIFLYA, VGFVIGGVAVIMPLGKLYGIL, WLYITSVVLFMAASAVCGAAP, VFAGAGGIGMYIGTMILLSIN, AYLSLVGLVWGIGTVLGPVIG, WAFYLNLVIGALLFPVWFFLL, FVGAILSIGAFVTTIMPINFG, NSGTIIALFVVSGVLWIAFAV, MLLFICAAAINSAVFVPIYFI, ALDSAIRLLPLIFLLCATILV, FGYYMPWYLVGGVFCLIANVF, GFEALLGLGAGGSVQAGYAVI, IMIAQIGGIALGLACASAVFI, and AKAFIVAYAGAAVSLVASLGF.

Belongs to the major facilitator superfamily. TCR/Tet family.

The protein localises to the cell membrane. Functionally, MFS-type transporter; part of the gene cluster that mediates the biosynthesis of phomenoic acid, a long chain aliphatic carboxylic acid that does not appear to be essential for pathogenicity but may play a role in allowing to outcompete other fungi in the environmental niche via its antifungal properties. Is probably involved in the efflux of phomenoic acid. This chain is Phomenoic acid biosynthesis cluster MFS-type transporter, found in Leptosphaeria maculans (strain JN3 / isolate v23.1.3 / race Av1-4-5-6-7-8) (Blackleg fungus).